Reading from the N-terminus, the 169-residue chain is Ribosome-binding factor A (169 aa).

A disordered region spans residues 124 to 169; that stretch reads AGAKHAGDADPYKSDIPEDVEIDEDDFDEEDEDLIDDEELDEDGNK. The span at 128-139 shows a compositional bias: basic and acidic residues; it reads HAGDADPYKSDI. Acidic residues predominate over residues 140 to 169; that stretch reads PEDVEIDEDDFDEEDEDLIDDEELDEDGNK.

The protein belongs to the RbfA family. In terms of assembly, monomer. Binds 30S ribosomal subunits, but not 50S ribosomal subunits or 70S ribosomes.

The protein localises to the cytoplasm. In terms of biological role, one of several proteins that assist in the late maturation steps of the functional core of the 30S ribosomal subunit. Associates with free 30S ribosomal subunits (but not with 30S subunits that are part of 70S ribosomes or polysomes). Required for efficient processing of 16S rRNA. May interact with the 5'-terminal helix region of 16S rRNA. This is Ribosome-binding factor A from Arthrobacter sp. (strain FB24).